Reading from the N-terminus, the 398-residue chain is Protochlorophyllide reductase, chloroplastic (398 aa).

It belongs to the short-chain dehydrogenases/reductases (SDR) family. POR subfamily.

The protein resides in the plastid. Its subcellular location is the chloroplast. The enzyme catalyses chlorophyllide a + NADP(+) = protochlorophyllide a + NADPH + H(+). It functions in the pathway porphyrin-containing compound metabolism; chlorophyll biosynthesis. Functionally, phototransformation of protochlorophyllide (Pchlide) to chlorophyllide (Chlide). In Daucus carota (Wild carrot), this protein is Protochlorophyllide reductase, chloroplastic (POR1).